Consider the following 89-residue polypeptide: Large ribosomal subunit protein uL23c (89 aa).

This sequence belongs to the universal ribosomal protein uL23 family. As to quaternary structure, part of the 50S ribosomal subunit.

The protein localises to the plastid. The protein resides in the chloroplast. Its function is as follows. Binds to 23S rRNA. This chain is Large ribosomal subunit protein uL23c (rpl23), found in Staurastrum punctulatum (Green alga).